We begin with the raw amino-acid sequence, 1018 residues long: Unconventional myosin-Ig (1018 aa).

An N-acetylmethionine modification is found at M1. The region spanning 9 to 707 is the Myosin motor domain; it reads YGKPDFVLLD…TLVTLEQSRA (699 aa). 102–109 lines the ATP pocket; the sequence is GESGAGKT. Residues 584–606 form an actin-binding region; that stretch reads MVALVENLASKEPFYVRCIKPNE. Residues 710–739 enclose the IQ domain; that stretch reads IPIIVLLLQKAWRGTLARWRCRRLRAIYTI. The TH1 domain occupies 824–1017; it reads GLRQDWGCRR…RGSFTLLWPS (194 aa).

Belongs to the TRAFAC class myosin-kinesin ATPase superfamily. Myosin family. As to quaternary structure, interacts with calmodulin; via its IQ motifs. Specifically expressed in hematopoietic cells.

The protein resides in the cell membrane. It localises to the cell projection. It is found in the phagocytic cup. Unconventional myosin required during immune response for detection of rare antigen-presenting cells by regulating T-cell migration. Unconventional myosins are actin-based motor molecules with ATPase activity and serve in intracellular movements. Acts as a regulator of T-cell migration by generating membrane tension, enforcing cell-intrinsic meandering search, thereby enhancing detection of rare antigens during lymph-node surveillance, enabling pathogen eradication. Also required in B-cells, where it regulates different membrane/cytoskeleton-dependent processes. Involved in Fc-gamma receptor (Fc-gamma-R) phagocytosis. In terms of biological role, constitutes the minor histocompatibility antigen HA-2. More generally, minor histocompatibility antigens (mHags) refer to immunogenic peptide which, when complexed with MHC, can generate an immune response after recognition by specific T-cells. The peptides are derived from polymorphic intracellular proteins, which are cleaved by normal pathways of antigen processing. The binding of these peptides to MHC class I or class II molecules and their expression on the cell surface can stimulate T-cell responses and thereby trigger graft rejection or graft-versus-host disease (GVHD) after hematopoietic stem cell transplantation from HLA-identical sibling donor. GVHD is a frequent complication after bone marrow transplantation (BMT), due to mismatch of minor histocompatibility antigen in HLA-matched sibling marrow transplants. HA-2 is restricted to MHC class I HLA-A*0201. The chain is Unconventional myosin-Ig (MYO1G) from Homo sapiens (Human).